We begin with the raw amino-acid sequence, 497 residues long: Glycerol kinase (497 aa).

Thr13 is an ADP binding site. Positions 13, 14, and 15 each coordinate ATP. Thr13 lines the sn-glycerol 3-phosphate pocket. Arg17 is a binding site for ADP. Sn-glycerol 3-phosphate contacts are provided by Arg83, Glu84, and Tyr135. Glycerol contacts are provided by Arg83, Glu84, and Tyr135. His231 is modified (phosphohistidine; by HPr). Asp245 provides a ligand contact to sn-glycerol 3-phosphate. Glycerol contacts are provided by Asp245 and Gln246. Residues Thr267 and Gly310 each contribute to the ADP site. ATP-binding residues include Thr267, Gly310, Gln314, and Gly411. ADP-binding residues include Gly411 and Asn415.

It belongs to the FGGY kinase family. As to quaternary structure, homotetramer and homodimer (in equilibrium). The phosphoenolpyruvate-dependent sugar phosphotransferase system (PTS), including enzyme I, and histidine-containing protein (HPr) are required for the phosphorylation, which leads to the activation of the enzyme.

It catalyses the reaction glycerol + ATP = sn-glycerol 3-phosphate + ADP + H(+). It participates in polyol metabolism; glycerol degradation via glycerol kinase pathway; sn-glycerol 3-phosphate from glycerol: step 1/1. Its activity is regulated as follows. Activated by phosphorylation and inhibited by fructose 1,6-bisphosphate (FBP). In terms of biological role, key enzyme in the regulation of glycerol uptake and metabolism. Catalyzes the phosphorylation of glycerol to yield sn-glycerol 3-phosphate. This Listeria monocytogenes serotype 4a (strain HCC23) protein is Glycerol kinase.